A 249-amino-acid chain; its full sequence is tRNA pseudouridine synthase A (249 aa).

Asp-53 functions as the Nucleophile in the catalytic mechanism. Tyr-111 serves as a coordination point for substrate.

Belongs to the tRNA pseudouridine synthase TruA family. Homodimer.

The catalysed reaction is uridine(38/39/40) in tRNA = pseudouridine(38/39/40) in tRNA. Formation of pseudouridine at positions 38, 39 and 40 in the anticodon stem and loop of transfer RNAs. This Streptococcus gordonii (strain Challis / ATCC 35105 / BCRC 15272 / CH1 / DL1 / V288) protein is tRNA pseudouridine synthase A.